The primary structure comprises 1102 residues: Putative ISWI chromatin-remodeling complex subunit YPL216W (1102 aa).

Residues 23-131 enclose the WAC domain; it reads ETPWVIKESS…DTVCLKTIQK (109 aa). The segment at 271–301 is disordered; sequence ELYTPLTIPPESDVEPADWKETSETSETSET. In terms of domain architecture, DDT spans 375–435; that stretch reads QFPTERLLVV…FLKTYNSKGS (61 aa). The stretch at 673–743 forms a coiled coil; the sequence is CNGIRLKLDS…EDIAFLEAKL (71 aa).

The protein localises to the nucleus. In terms of biological role, may be required for the activity of an ISWI chromatin-remodeling complex. The polypeptide is Putative ISWI chromatin-remodeling complex subunit YPL216W (Saccharomyces cerevisiae (strain ATCC 204508 / S288c) (Baker's yeast)).